Reading from the N-terminus, the 391-residue chain is Chorismate synthase (391 aa).

An NADP(+)-binding site is contributed by arginine 48. Residues 126-128, glycine 286, 301-305, and arginine 328 contribute to the FMN site; these read RAS and KPTSS.

Belongs to the chorismate synthase family. FMNH2 is required as a cofactor.

It catalyses the reaction 5-O-(1-carboxyvinyl)-3-phosphoshikimate = chorismate + phosphate. It participates in metabolic intermediate biosynthesis; chorismate biosynthesis; chorismate from D-erythrose 4-phosphate and phosphoenolpyruvate: step 7/7. Its function is as follows. Catalyzes the anti-1,4-elimination of the C-3 phosphate and the C-6 proR hydrogen from 5-enolpyruvylshikimate-3-phosphate (EPSP) to yield chorismate, which is the branch point compound that serves as the starting substrate for the three terminal pathways of aromatic amino acid biosynthesis. This reaction introduces a second double bond into the aromatic ring system. The chain is Chorismate synthase from Saccharolobus solfataricus (strain ATCC 35092 / DSM 1617 / JCM 11322 / P2) (Sulfolobus solfataricus).